A 260-amino-acid chain; its full sequence is Ribosomal RNA small subunit methyltransferase J (260 aa).

Residues 125–126 and Asp179 contribute to the S-adenosyl-L-methionine site; that span reads ER.

This sequence belongs to the methyltransferase superfamily. RsmJ family.

It localises to the cytoplasm. The enzyme catalyses guanosine(1516) in 16S rRNA + S-adenosyl-L-methionine = N(2)-methylguanosine(1516) in 16S rRNA + S-adenosyl-L-homocysteine + H(+). Functionally, specifically methylates the guanosine in position 1516 of 16S rRNA. The sequence is that of Ribosomal RNA small subunit methyltransferase J from Pseudomonas fluorescens (strain Pf0-1).